The sequence spans 624 residues: Probable potassium transport system protein Kup (624 aa).

The next 12 membrane-spanning stretches (helical) occupy residues 16-36, 59-79, 106-126, 147-167, 174-194, 211-231, 252-272, 292-312, 342-362, 371-391, 394-414, and 418-438; these read ALLT…SPLY, IISM…VMLV, FVAV…VITP, FILP…PLGT, FGPI…PQII, LIVA…LTVT, WFCV…ALVI, IPLV…VISG, IYMP…VLVF, AYGL…LIYV, TWWK…LLFA, and TKIH…IVVM.

It belongs to the HAK/KUP transporter (TC 2.A.72) family.

The protein localises to the cell membrane. It catalyses the reaction K(+)(in) + H(+)(in) = K(+)(out) + H(+)(out). Its function is as follows. Transport of potassium into the cell. Likely operates as a K(+):H(+) symporter. The chain is Probable potassium transport system protein Kup from Corynebacterium glutamicum (strain ATCC 13032 / DSM 20300 / JCM 1318 / BCRC 11384 / CCUG 27702 / LMG 3730 / NBRC 12168 / NCIMB 10025 / NRRL B-2784 / 534).